The chain runs to 237 residues: MVIVMYSIKMRASKNGKHISGAERIVNKDEIEETVKELVRRALTHENGTPDFINIKIEEIKEEITYINHLPIKTIHCKDKEEARETAKKILRNEGIPDSVIDYAYEIIDKGGMRGAAILNLKGERLEPDKERGVRVKNIDTTKELKEKILKENLGTERTVDAIAIASKVIHLGVIAELCTSDNKSYTTGYVATKKGYFRITNLKKEGESGGRVFFVKDDVDIEDLINKLENKPFIIK.

The protein belongs to the BioW family. In terms of assembly, homodimer. It depends on Mg(2+) as a cofactor.

It carries out the reaction heptanedioate + ATP + CoA = 6-carboxyhexanoyl-CoA + AMP + diphosphate. It participates in metabolic intermediate metabolism; pimeloyl-CoA biosynthesis; pimeloyl-CoA from pimelate: step 1/1. Functionally, catalyzes the transformation of pimelate into pimeloyl-CoA with concomitant hydrolysis of ATP to AMP. The polypeptide is 6-carboxyhexanoate--CoA ligase (Methanocaldococcus jannaschii (strain ATCC 43067 / DSM 2661 / JAL-1 / JCM 10045 / NBRC 100440) (Methanococcus jannaschii)).